Consider the following 309-residue polypeptide: Calcium homeostasis modulator protein 5 (309 aa).

Over 1–15 the chain is Cytoplasmic; that stretch reads MDAFQGILKFFLNQK. A 1,2-diacyl-sn-glycero-3-phosphate contacts are provided by Lys15, Arg32, and Val37. The helical transmembrane segment at 16–37 threads the bilayer; that stretch reads TVIGYSFMALLTVGSERLFSVV. The Extracellular portion of the chain corresponds to 38-45; the sequence is AFKCPCST. 3 disulfide bridges follow: Cys41-Cys127, Cys43-Cys158, and Cys142-Cys149. Residues 46–70 form a helical membrane-spanning segment; that stretch reads ENMTYGLVFLFAPAWVLLILGFFLN. Over 71-99 the chain is Cytoplasmic; the sequence is NRSWRLFTGCCVNPRKIFPRGHSCRFFYV. The chain crosses the membrane as a helical span at residues 100-129; it reads LGQITLSSLVAPVMWLSVALLNGTFYECAM. 2 residues coordinate a 1,2-diacyl-sn-glycero-3-phosphate: Gln102 and Asn121. At 130–174 the chain is on the extracellular side; sequence SGTRSSGLLELICKGKPKECWEELHKVSCGKTSMLPTVNEELKLS. Residues 175-200 traverse the membrane as a helical segment; sequence LQAQSQILGWCLICSASFFSLLTTCY. Topologically, residues 201–309 are cytoplasmic; that stretch reads ARCRSKVSYL…MVLVGTAHNM (109 aa). Arg202 provides a ligand contact to a 1,2-diacyl-sn-glycero-3-phosphate.

The protein belongs to the CALHM family. Oligomerizes to form undecameric cone-shaped channels.

Its subcellular location is the membrane. May assemble to form large pore channels with gating and ion conductance likely regulated by membrane lipids. The sequence is that of Calcium homeostasis modulator protein 5 from Homo sapiens (Human).